We begin with the raw amino-acid sequence, 429 residues long: Histidine--tRNA ligase (429 aa).

This sequence belongs to the class-II aminoacyl-tRNA synthetase family. As to quaternary structure, homodimer.

It is found in the cytoplasm. It carries out the reaction tRNA(His) + L-histidine + ATP = L-histidyl-tRNA(His) + AMP + diphosphate + H(+). The protein is Histidine--tRNA ligase of Oceanobacillus iheyensis (strain DSM 14371 / CIP 107618 / JCM 11309 / KCTC 3954 / HTE831).